The primary structure comprises 247 residues: Carboxy-S-adenosyl-L-methionine synthase (247 aa).

Residues Y40, 65-67 (GSS), 90-91 (DN), 122-123 (DI), N137, and R204 each bind S-adenosyl-L-methionine.

This sequence belongs to the class I-like SAM-binding methyltransferase superfamily. Cx-SAM synthase family. As to quaternary structure, homodimer.

The enzyme catalyses prephenate + S-adenosyl-L-methionine = carboxy-S-adenosyl-L-methionine + 3-phenylpyruvate + H2O. Functionally, catalyzes the conversion of S-adenosyl-L-methionine (SAM) to carboxy-S-adenosyl-L-methionine (Cx-SAM). The sequence is that of Carboxy-S-adenosyl-L-methionine synthase from Pseudomonas fluorescens (strain SBW25).